Consider the following 320-residue polypeptide: 3-O-acetylpapaveroxine carboxylesterase CXE1 (320 aa).

Residues 72 to 74 carry the Involved in the stabilization of the negatively charged intermediate by the formation of the oxyanion hole motif; it reads HGG. Active-site residues include Ser158, Asp262, and His292.

Belongs to the 'GDXG' lipolytic enzyme family.

It carries out the reaction 3-O-acetylpapaveroxine + H2O = narcotine hemiacetal + acetate + H(+). It participates in alkaloid biosynthesis. Functionally, carboxylesterase involved in the biosynthesis of the benzylisoquinoline alkaloid noscapine. Converts 3-O-acetylpapaveroxine to papaveroxine which spontaneously rearranges to narcotine hemiacetal. The protein is 3-O-acetylpapaveroxine carboxylesterase CXE1 of Papaver somniferum (Opium poppy).